Here is a 987-residue protein sequence, read N- to C-terminus: Collagen alpha-1(I) chain (987 aa).

The span at 1–21 shows a compositional bias: pro residues; the sequence is SVPGPMGPSGPRGLPGPPGPG. The disordered stretch occupies residues 1 to 987; the sequence is SVPGPMGPSG…PGPPGPPGPP (987 aa). Pro-15, Pro-18, Pro-20, Pro-29, Pro-32, Pro-35, Pro-50, Pro-65, Pro-71, Pro-80, and Pro-86 each carry 4-hydroxyproline. The segment covering 23-41 has biased composition (low complexity); the sequence is QGFQGPPGEPGEPGSSGPM. Residues 53 to 67 show a composition bias toward basic and acidic residues; it reads NGDDGEAGKPGRPGE. At Lys-89 the chain carries 5-hydroxylysine; alternate. Lys-89 carries an O-linked (Gal...) hydroxylysine; alternate glycan. Ser-95 is subject to Phosphoserine. Residues 103 to 119 are compositionally biased toward low complexity; it reads DAGPAGPKGEPGSPGEN. Residues Pro-113, Pro-116, Pro-122, Pro-131, Pro-137, Pro-158, Pro-167, Pro-170, Pro-197, Pro-200, Pro-212, Pro-218, Pro-227, Pro-233, Pro-236, and Pro-251 each carry the 4-hydroxyproline modification. The segment covering 137–155 has biased composition (low complexity); the sequence is PGASGPAGARGNDGAAGAA. A compositionally biased stretch (pro residues) spans 157-169; it reads PPGPTGPAGPPGF. Residues 203-253 show a composition bias toward low complexity; it reads AGAAGPAGNPGADGQPGAKGANGAPGIAGAPGFPGARGPSGPQGPSGAPGP. Lys-254 is subject to 5-hydroxylysine. A 4-hydroxyproline mark is found at Pro-260, Pro-263, Pro-275, Pro-284, Pro-299, Pro-305, Pro-314, and Pro-320. The span at 309-318 shows a compositional bias: gly residues; the sequence is GERGGPGSRG. Position 329 is a 5-hydroxylysine (Lys-329). A 4-hydroxyproline mark is found at Pro-338, Pro-347, Pro-353, Pro-359, Pro-368, Pro-371, Pro-380, Pro-389, Pro-395, Pro-407, Pro-416, Pro-425, Pro-428, Pro-446, Pro-468, Pro-474, Pro-480, Pro-486, Pro-492, Pro-504, Pro-513, Pro-526, Pro-532, and Pro-541. The segment covering 362–388 has biased composition (low complexity); the sequence is KGLTGSPGSPGPDGKTGPPGPAGQDGR. A compositionally biased stretch (low complexity) spans 397-416; sequence ARGQAGVMGFPGPKGAAGEP. Over residues 458–483 the composition is skewed to low complexity; sequence QGPAPGFQGLPGPAGPPGEAGKPGEQ. At Lys-553 the chain carries 5-hydroxylysine. Pro-559, Pro-574, and Pro-580 each carry 4-hydroxyproline. A compositionally biased stretch (low complexity) spans 586–600; that stretch reads SGPSGPAGPTGARGA. A Phosphoserine modification is found at Ser-589. 8 positions are modified to 4-hydroxyproline: Pro-601, Pro-607, Pro-610, Pro-619, Pro-625, Pro-643, Pro-652, and Pro-661. Positions 613–640 are enriched in low complexity; the sequence is AGFAGPPGADGQPGAKGEPGDAGAKGDA. Pro residues predominate over residues 642–654; it reads PPGPAGPTGPPGP. Lys-664 is subject to 5-hydroxylysine. Low complexity predominate over residues 669-685; the sequence is SAGPPGATGFPGAAGRV. 4-hydroxyproline is present on residues Pro-673 and Pro-679. At Pro-687 the chain carries 3-hydroxyproline. Pro-688, Pro-697, Pro-700, Pro-721, Pro-730, Pro-738, Pro-747, Pro-765, Pro-774, Pro-777, Pro-783, Pro-798, Pro-804, Pro-810, Pro-819, and Pro-825 each carry 4-hydroxyproline. The segment covering 714–723 has biased composition (low complexity); it reads ETGPAGRPGE. Residues 735 to 747 are compositionally biased toward low complexity; it reads KGSPGADGPAGAP. Positions 797–807 are enriched in pro residues; the sequence is PPGPMGPPGLA. A compositionally biased stretch (low complexity) spans 809–824; it reads PPGESGREGSPGAEGS. A 5-hydroxylysine modification is found at Lys-834. Residues 843 to 858 show a composition bias toward pro residues; that stretch reads AGPPGAPGAPGAPGPV. 4-hydroxyproline occurs at positions 846, 849, and 852. The segment covering 879–893 has biased composition (low complexity); sequence AGPAGARGPAGPQGP. The span at 894 to 905 shows a compositional bias: basic and acidic residues; that stretch reads RGDKGETGEQGD. Lys-897 bears the 5-hydroxylysine mark. Pro-918, Pro-921, Pro-939, and Pro-954 each carry 4-hydroxyproline. The segment covering 921–954 has biased composition (low complexity); the sequence is PGEQGPSGASGPAGPRGPPGSAGSPGKDGLNGLP. Pro-959 carries the post-translational modification 3-hydroxyproline. Pro-960 bears the 4-hydroxyproline mark. A compositionally biased stretch (pro residues) spans 972 to 987; that stretch reads VGPPGPPGPPGPPGPP. Pro-974 is subject to 3-hydroxyproline. Residue Pro-975 is modified to 4-hydroxyproline. 3-hydroxyproline is present on Pro-977. The residue at position 978 (Pro-978) is a 4-hydroxyproline. Pro-980 bears the 3-hydroxyproline mark. Pro-981, Pro-984, and Pro-987 each carry 4-hydroxyproline.

The protein belongs to the fibrillar collagen family. As to quaternary structure, trimers of one alpha 2(I) and two alpha 1(I) chains. Contains mostly 4-hydroxyproline. Proline residues at the third position of the tripeptide repeating unit (G-X-Y) are hydroxylated in some or all of the chains. In terms of processing, contains 3-hydroxyproline at a few sites. This modification occurs on the first proline residue in the sequence motif Gly-Pro-Hyp, where Hyp is 4-hydroxyproline. Post-translationally, lysine residues at the third position of the tripeptide repeating unit (G-X-Y) are 5-hydroxylated in some or all of the chains. O-glycosylated on hydroxylated lysine residues. The O-linked glycan consists of a Glc-Gal disaccharide. As to expression, expressed in bones.

It is found in the secreted. The protein resides in the extracellular space. Its subcellular location is the extracellular matrix. Its function is as follows. Type I collagen is a member of group I collagen (fibrillar forming collagen). This Glossotherium robustum (Ground sloth) protein is Collagen alpha-1(I) chain.